Consider the following 312-residue polypeptide: Ribosomal protein L11 methyltransferase (312 aa).

Positions 162, 183, 205, and 248 each coordinate S-adenosyl-L-methionine.

Belongs to the methyltransferase superfamily. PrmA family.

It localises to the cytoplasm. It catalyses the reaction L-lysyl-[protein] + 3 S-adenosyl-L-methionine = N(6),N(6),N(6)-trimethyl-L-lysyl-[protein] + 3 S-adenosyl-L-homocysteine + 3 H(+). Methylates ribosomal protein L11. The sequence is that of Ribosomal protein L11 methyltransferase from Bacillus cytotoxicus (strain DSM 22905 / CIP 110041 / 391-98 / NVH 391-98).